We begin with the raw amino-acid sequence, 1390 residues long: DNA-directed RNA polymerase subunit beta (1390 aa).

This sequence belongs to the RNA polymerase beta chain family. The RNAP catalytic core consists of 2 alpha, 1 beta, 1 beta' and 1 omega subunit. When a sigma factor is associated with the core the holoenzyme is formed, which can initiate transcription.

It carries out the reaction RNA(n) + a ribonucleoside 5'-triphosphate = RNA(n+1) + diphosphate. In terms of biological role, DNA-dependent RNA polymerase catalyzes the transcription of DNA into RNA using the four ribonucleoside triphosphates as substrates. This Chromobacterium violaceum (strain ATCC 12472 / DSM 30191 / JCM 1249 / CCUG 213 / NBRC 12614 / NCIMB 9131 / NCTC 9757 / MK) protein is DNA-directed RNA polymerase subunit beta.